The primary structure comprises 741 residues: Melanoma-associated antigen D4 (741 aa).

Over residues 1 to 13 (MAEGSFSVQSESY) the composition is skewed to polar residues. Disordered stretches follow at residues 1–27 (MAEG…EVGE), 136–206 (RVAT…EGPS), 247–296 (MAFP…KALA), and 323–379 (PEGA…QPSL). The segment covering 14–27 (SVEDMDEGSDEVGE) has biased composition (acidic residues). Composition is skewed to polar residues over residues 140-151 (PQVSGEDTQPTT) and 187-196 (TSAQSQTGSP). Residues 354–363 (DEYESSEEER) show a composition bias toward acidic residues. Positions 413-611 (LQERANKLVK…REWKAHFLEA (199 aa)) constitute an MAGE domain. A disordered region spans residues 700 to 720 (VSSGTNGGASTSVLDGPSTSS). The span at 701–720 (SSGTNGGASTSVLDGPSTSS) shows a compositional bias: polar residues.

As to quaternary structure, interacts with TRIM27. As to expression, expressed only in brain and ovary among normal tissues. Isoform 1 and isoform 2 are specifically expressed in glioma cells among cancer cells. Detected in some renal cell carcinoma samples.

Functionally, may enhance ubiquitin ligase activity of RING-type zinc finger-containing E3 ubiquitin-protein ligases. Proposed to act through recruitment and/or stabilization of the Ubl-conjugating enzyme (E2) at the E3:substrate complex. This Homo sapiens (Human) protein is Melanoma-associated antigen D4 (MAGED4).